A 275-amino-acid polypeptide reads, in one-letter code: Rhamnulose-1-phosphate aldolase (275 aa).

Glu-117 is a catalytic residue. Positions 141, 143, and 212 each coordinate Zn(2+).

The protein belongs to the aldolase class II family. RhaD subfamily. Homotetramer. Zn(2+) serves as cofactor.

The protein localises to the cytoplasm. It carries out the reaction L-rhamnulose 1-phosphate = (S)-lactaldehyde + dihydroxyacetone phosphate. The protein operates within carbohydrate degradation; L-rhamnose degradation; glycerone phosphate from L-rhamnose: step 3/3. Functionally, catalyzes the reversible cleavage of L-rhamnulose-1-phosphate to dihydroxyacetone phosphate (DHAP) and L-lactaldehyde. The protein is Rhamnulose-1-phosphate aldolase of Salmonella heidelberg (strain SL476).